A 429-amino-acid polypeptide reads, in one-letter code: GTPase Obg (429 aa).

In terms of domain architecture, Obg spans 1–158 (MLIDKCTLFL…IEAQFELKYI (158 aa)). Positions 159–330 (ADVGLLGLPN…LLKDIFKDYK (172 aa)) constitute an OBG-type G domain. Residues 165-172 (GLPNAGKS), 190-194 (FTTLS), 211-214 (DIPG), 281-284 (NKID), and 311-313 (SGF) contribute to the GTP site. The Mg(2+) site is built by S172 and T192. The 79-residue stretch at 351-429 (KVEKEQEDIV…RIQDVMFEIN (79 aa)) folds into the OCT domain.

The protein belongs to the TRAFAC class OBG-HflX-like GTPase superfamily. OBG GTPase family. Monomer. Requires Mg(2+) as cofactor.

The protein localises to the cytoplasm. An essential GTPase which binds GTP, GDP and possibly (p)ppGpp with moderate affinity, with high nucleotide exchange rates and a fairly low GTP hydrolysis rate. Plays a role in control of the cell cycle, stress response, ribosome biogenesis and in those bacteria that undergo differentiation, in morphogenesis control. This chain is GTPase Obg, found in Malacoplasma penetrans (strain HF-2) (Mycoplasma penetrans).